The primary structure comprises 185 residues: Protein FAM219A (185 aa).

Met-1 carries the post-translational modification N-acetylmethionine. Residues 1-131 (MMEEIDRFQV…SRYSSSGYSS (131 aa)) form a disordered region. Ser-47 carries the post-translational modification Phosphoserine. The span at 52 to 61 (KLEKQRELAR) shows a compositional bias: basic and acidic residues. A compositionally biased stretch (polar residues) spans 66–80 (KNGSMGSPVNQQPKK). Phosphoserine occurs at positions 72 and 102. The residue at position 113 (Thr-113) is a Phosphothreonine. Ser-115 and Ser-122 each carry phosphoserine. A compositionally biased stretch (low complexity) spans 122–131 (SRYSSSGYSS).

The protein belongs to the FAM219 family.

The sequence is that of Protein FAM219A (FAM219A) from Homo sapiens (Human).